A 271-amino-acid polypeptide reads, in one-letter code: Formamidopyrimidine-DNA glycosylase (271 aa).

P2 functions as the Schiff-base intermediate with DNA in the catalytic mechanism. E3 acts as the Proton donor in catalysis. K58 functions as the Proton donor; for beta-elimination activity in the catalytic mechanism. DNA-binding residues include H92, R111, and R152. The FPG-type zinc finger occupies 237-271 (SVYGREGEACKQCGRVLKHATIGQRATVWCGSCQR). The Proton donor; for delta-elimination activity role is filled by R261.

The protein belongs to the FPG family. As to quaternary structure, monomer. Requires Zn(2+) as cofactor.

It carries out the reaction Hydrolysis of DNA containing ring-opened 7-methylguanine residues, releasing 2,6-diamino-4-hydroxy-5-(N-methyl)formamidopyrimidine.. The enzyme catalyses 2'-deoxyribonucleotide-(2'-deoxyribose 5'-phosphate)-2'-deoxyribonucleotide-DNA = a 3'-end 2'-deoxyribonucleotide-(2,3-dehydro-2,3-deoxyribose 5'-phosphate)-DNA + a 5'-end 5'-phospho-2'-deoxyribonucleoside-DNA + H(+). Functionally, involved in base excision repair of DNA damaged by oxidation or by mutagenic agents. Acts as a DNA glycosylase that recognizes and removes damaged bases. Has a preference for oxidized purines, such as 7,8-dihydro-8-oxoguanine (8-oxoG). Has AP (apurinic/apyrimidinic) lyase activity and introduces nicks in the DNA strand. Cleaves the DNA backbone by beta-delta elimination to generate a single-strand break at the site of the removed base with both 3'- and 5'-phosphates. This Xanthomonas euvesicatoria pv. vesicatoria (strain 85-10) (Xanthomonas campestris pv. vesicatoria) protein is Formamidopyrimidine-DNA glycosylase.